We begin with the raw amino-acid sequence, 219 residues long: Guanylate kinase (219 aa).

Positions Gly-15–Lys-194 constitute a Guanylate kinase-like domain. Ser-22–Thr-29 contacts ATP.

This sequence belongs to the guanylate kinase family.

It localises to the cytoplasm. It carries out the reaction GMP + ATP = GDP + ADP. Its function is as follows. Essential for recycling GMP and indirectly, cGMP. This Bradyrhizobium diazoefficiens (strain JCM 10833 / BCRC 13528 / IAM 13628 / NBRC 14792 / USDA 110) protein is Guanylate kinase.